Here is a 154-residue protein sequence, read N- to C-terminus: UPF0225 protein YpsIP31758_1970 (154 aa).

It belongs to the UPF0225 family.

The sequence is that of UPF0225 protein YpsIP31758_1970 from Yersinia pseudotuberculosis serotype O:1b (strain IP 31758).